The following is a 452-amino-acid chain: Bifunctional protein GlmU (452 aa).

The tract at residues 1-226 (MSLSVVILAA…ATEVEGVNTR (226 aa)) is pyrophosphorylase. Residues 8-11 (LAAG), K22, Q73, 78-79 (GT), 100-102 (YGD), G137, E151, N166, and N224 contribute to the UDP-N-acetyl-alpha-D-glucosamine site. Residue D102 participates in Mg(2+) binding. N224 serves as a coordination point for Mg(2+). A linker region spans residues 227–247 (LQLANLERAYQLKKATELLLS). The interval 248–452 (GVMLRDPNRF…INNWKRPTKK (205 aa)) is N-acetyltransferase. UDP-N-acetyl-alpha-D-glucosamine-binding residues include R330 and K348. The active-site Proton acceptor is H360. UDP-N-acetyl-alpha-D-glucosamine is bound by residues Y363 and N374. Acetyl-CoA is bound by residues A377, 383 to 384 (NY), S402, A420, and R437.

It in the N-terminal section; belongs to the N-acetylglucosamine-1-phosphate uridyltransferase family. The protein in the C-terminal section; belongs to the transferase hexapeptide repeat family. As to quaternary structure, homotrimer. Mg(2+) serves as cofactor.

The protein resides in the cytoplasm. It catalyses the reaction alpha-D-glucosamine 1-phosphate + acetyl-CoA = N-acetyl-alpha-D-glucosamine 1-phosphate + CoA + H(+). It carries out the reaction N-acetyl-alpha-D-glucosamine 1-phosphate + UTP + H(+) = UDP-N-acetyl-alpha-D-glucosamine + diphosphate. It functions in the pathway nucleotide-sugar biosynthesis; UDP-N-acetyl-alpha-D-glucosamine biosynthesis; N-acetyl-alpha-D-glucosamine 1-phosphate from alpha-D-glucosamine 6-phosphate (route II): step 2/2. The protein operates within nucleotide-sugar biosynthesis; UDP-N-acetyl-alpha-D-glucosamine biosynthesis; UDP-N-acetyl-alpha-D-glucosamine from N-acetyl-alpha-D-glucosamine 1-phosphate: step 1/1. Its pathway is bacterial outer membrane biogenesis; LPS lipid A biosynthesis. Its function is as follows. Catalyzes the last two sequential reactions in the de novo biosynthetic pathway for UDP-N-acetylglucosamine (UDP-GlcNAc). The C-terminal domain catalyzes the transfer of acetyl group from acetyl coenzyme A to glucosamine-1-phosphate (GlcN-1-P) to produce N-acetylglucosamine-1-phosphate (GlcNAc-1-P), which is converted into UDP-GlcNAc by the transfer of uridine 5-monophosphate (from uridine 5-triphosphate), a reaction catalyzed by the N-terminal domain. This is Bifunctional protein GlmU from Psychromonas ingrahamii (strain DSM 17664 / CCUG 51855 / 37).